Consider the following 344-residue polypeptide: DNA-directed RNA polymerase subunit alpha (344 aa).

Residues 1–246 (MLVEKFLKDF…EFLFPLVDFE (246 aa)) are alpha N-terminal domain (alpha-NTD). The tract at residues 259–344 (ESSNLLDMSI…VLSKNVKISE (86 aa)) is alpha C-terminal domain (alpha-CTD).

This sequence belongs to the RNA polymerase alpha chain family. As to quaternary structure, homodimer. The RNAP catalytic core consists of 2 alpha, 1 beta, 1 beta' and 1 omega subunit. When a sigma factor is associated with the core the holoenzyme is formed, which can initiate transcription.

The catalysed reaction is RNA(n) + a ribonucleoside 5'-triphosphate = RNA(n+1) + diphosphate. DNA-dependent RNA polymerase catalyzes the transcription of DNA into RNA using the four ribonucleoside triphosphates as substrates. In Borreliella burgdorferi (strain ATCC 35210 / DSM 4680 / CIP 102532 / B31) (Borrelia burgdorferi), this protein is DNA-directed RNA polymerase subunit alpha.